We begin with the raw amino-acid sequence, 639 residues long: MRYSKNFDVIVVGGGHAGTEAALASARMGCDTLLITHSIENLGAMSCNPSIGGIGKGHLVKEIDAMGGAMAAATDEAGIQFRILNSSKGPAVRATRAQGDRVLYKAAIRRRLENQPNLSLFQAAVDDLLVKGDEVQGVVTQMGLEFMAKKVVLTAGTFLDGKIHVGLNNYAGGRAGDPAAVSLSARLKELKLPQGRLKTGTPPRIDGRTIDFSVMLEQPGDLDPVPVFSYLGRPEQHPKQVPCWISHTNEQTHDIIRGGLDRSPMYTGVIEGVGPRYCPSIEDKIHRFASRNSHQIFLEPEGLTTNEFYPNGISTSLPFDVQWELVRSIRGLESAVIVRPGYAIEYDFFDPRHLRHSLETKAIGGLYFAGQINGTTGYEEAAAQGMLAGINAGLAAQGKEAWLPKRSESYIGVLVDDLITRGVQEPYRMFTSRAEYRLSLREDNADMRLTAIGRDLGLVDDYRWEVFCRKQEAVSRETSRLKDIWVGPKHEIAPLVTQLLGQELSHECNLTELLRRPGITYEAITALGNRIWAPESLDDDLGLAAQISDQVEISVKYQGYIERQAVEIARQEHNETFPLPEGLDYSQVLGLSKEVQQKLNLHKPETLGQAGRISGVTPAALSLLLVHLKKGLGRTQETI.

13 to 18 (GGGHAG) serves as a coordination point for FAD. 274–288 (GPRYCPSIEDKIHRF) is an NAD(+) binding site.

Belongs to the MnmG family. Homodimer. Heterotetramer of two MnmE and two MnmG subunits. FAD serves as cofactor.

The protein resides in the cytoplasm. Functionally, NAD-binding protein involved in the addition of a carboxymethylaminomethyl (cmnm) group at the wobble position (U34) of certain tRNAs, forming tRNA-cmnm(5)s(2)U34. In Polynucleobacter asymbioticus (strain DSM 18221 / CIP 109841 / QLW-P1DMWA-1) (Polynucleobacter necessarius subsp. asymbioticus), this protein is tRNA uridine 5-carboxymethylaminomethyl modification enzyme MnmG.